Reading from the N-terminus, the 460-residue chain is Proton extrusion protein PxcA (460 aa).

A disordered region spans residues 84–194 (RLPDPEQNGS…KTNLDNSNAP (111 aa)). The span at 114-136 (NDGKDAENGRQSRDPSILEKLEF) shows a compositional bias: basic and acidic residues. The span at 167–194 (LTSSQPEPSDPSIKTNLAKTNLDNSNAP) shows a compositional bias: polar residues. The next 4 membrane-spanning stretches (helical) occupy residues 242-262 (FLLL…HFLF), 337-357 (GLKN…LILI), 373-393 (IYGL…DVFV), and 420-440 (FIYG…KYWI).

It belongs to the CemA family.

The protein localises to the cell inner membrane. Its function is as follows. Required for H(+) efflux immediately after light irradiation to form a rapid H(+) concentration gradient across the thylakoid membranes. Together with PxcL, contributes to transient H(+) uptake following dark to light transition. In Synechococcus sp. (strain JA-3-3Ab) (Cyanobacteria bacterium Yellowstone A-Prime), this protein is Proton extrusion protein PxcA.